A 221-amino-acid chain; its full sequence is Serotriflin (221 aa).

In terms of domain architecture, SCP spans 19–147; sequence LDKHNALRRS…SYNYYYVCHY (129 aa). An N-linked (GlcNAc...) asparagine glycan is attached at Asn48. 8 disulfides stabilise this stretch: Cys56–Cys134, Cys73–Cys148, Cys129–Cys145, Cys167–Cys174, Cys170–Cys179, Cys183–Cys216, Cys192–Cys210, and Cys201–Cys214. In terms of domain architecture, ShKT spans 183-216; sequence CKHVDRYSNCNSLVQQISCQSNNMNTDCPASCFC.

In terms of assembly, forms a stable, non-covalent complex with SSP-2.

It is found in the secreted. The protein is Serotriflin of Protobothrops flavoviridis (Habu).